A 225-amino-acid polypeptide reads, in one-letter code: C-reactive protein (225 aa).

An N-terminal signal peptide occupies residues 1 to 18 (MLVVFLCLLSVTLEATEG). The region spanning 23-225 (SGKVLQFKTA…TGNVLVATDN (203 aa)) is the Pentraxin (PTX) domain. Cys-54 and Cys-116 are oxidised to a cystine. The Ca(2+) site is built by Asp-78, Asp-157, Pro-158, Asp-159, and Gln-169.

This sequence belongs to the pentraxin family. As to quaternary structure, homotrimer. It depends on Ca(2+) as a cofactor.

The protein resides in the secreted. Functionally, displays several functions associated with host defense: it promotes agglutination, bacterial capsular swelling, phagocytosis, and complement fixation through its calcium-dependent binding to phosphorylcholine. The sequence is that of C-reactive protein from Danio rerio (Zebrafish).